The chain runs to 129 residues: Nif-specific regulatory protein (129 aa).

The Sigma-54 factor interaction domain maps to 1–46 (EFLLTKIGRQQGRPLTVTDSAIRLLMSHRWPGNVRDVENCLERSAI). The segment at residues 101 to 129 (QAKAARLLGMTPRQIAYRIQTLNIHMRKI) is a DNA-binding region (H-T-H motif).

In terms of assembly, interacts with sigma-54.

Its function is as follows. Required for activation of most nif operons, which are directly involved in nitrogen fixation. The chain is Nif-specific regulatory protein (nifA) from Azotobacter chroococcum mcd 1.